The primary structure comprises 1086 residues: Formin-like protein 2 (1086 aa).

G2 carries N-myristoyl glycine lipidation. The GBD/FH3 domain maps to 23–469; sequence LPMPEPGELE…EAIQRQSTLE (447 aa). At S188 the chain carries Phosphoserine. Positions 513-597 are disordered; that stretch reads SVGPTMGAAS…APPLPSAPPL (85 aa). Positions 525–537 are enriched in pro residues; sequence PLPPPPPPLPPSS. Over residues 538 to 547 the composition is skewed to polar residues; that stretch reads DTPETVQNGP. Pro residues-rich tracts occupy residues 548 to 576 and 583 to 597; these read VTPPMPPPPPPPPPPPPPPPPPPPPPLPG and PAPPLAPPLPSAPPL. Positions 616-1007 constitute an FH2 domain; the sequence is IKKPIKTKFR…LMEKLLEQEA (392 aa). A DAD domain is found at 1040–1079; the sequence is NRHVYEGKDGAIEDIITVLKTVPFTARTAKRGSRFFCEPV.

The protein belongs to the formin homology family.

The protein localises to the cytoplasm. Plays a role in the regulation of cell morphology and cytoskeletal organization. Required in the cortical actin filament dynamics. In Homo sapiens (Human), this protein is Formin-like protein 2.